The sequence spans 197 residues: 3-isopropylmalate dehydratase small subunit (197 aa).

The protein belongs to the LeuD family. LeuD type 1 subfamily. As to quaternary structure, heterodimer of LeuC and LeuD.

The enzyme catalyses (2R,3S)-3-isopropylmalate = (2S)-2-isopropylmalate. Its pathway is amino-acid biosynthesis; L-leucine biosynthesis; L-leucine from 3-methyl-2-oxobutanoate: step 2/4. Functionally, catalyzes the isomerization between 2-isopropylmalate and 3-isopropylmalate, via the formation of 2-isopropylmaleate. The sequence is that of 3-isopropylmalate dehydratase small subunit from Corynebacterium glutamicum (strain ATCC 13032 / DSM 20300 / JCM 1318 / BCRC 11384 / CCUG 27702 / LMG 3730 / NBRC 12168 / NCIMB 10025 / NRRL B-2784 / 534).